Consider the following 226-residue polypeptide: 7-cyano-7-deazaguanine synthase (226 aa).

8 to 18 contributes to the ATP binding site; sequence ISGGLDSTTCL. Zn(2+) contacts are provided by C188, C198, C201, and C204.

This sequence belongs to the QueC family. Zn(2+) serves as cofactor.

The catalysed reaction is 7-carboxy-7-deazaguanine + NH4(+) + ATP = 7-cyano-7-deazaguanine + ADP + phosphate + H2O + H(+). It functions in the pathway purine metabolism; 7-cyano-7-deazaguanine biosynthesis. Its function is as follows. Catalyzes the ATP-dependent conversion of 7-carboxy-7-deazaguanine (CDG) to 7-cyano-7-deazaguanine (preQ(0)). This is 7-cyano-7-deazaguanine synthase from Coxiella burnetii (strain RSA 331 / Henzerling II).